The chain runs to 177 residues: CASP-like protein 2U1 (177 aa).

The helical transmembrane segment at 1–21 threads the bilayer; sequence MVLRIVASLLSIAALVLMAKD. At 22–48 the chain is on the cytoplasmic side; sequence KQVVYLNLAGEELTLEAKHSYVEAFVY. Residues 49-69 form a helical membrane-spanning segment; the sequence is LVYSNGLVAIYCFLLVFALVF. Residues 70-80 are Extracellular-facing; that stretch reads RLIDKAGCGKS. The chain crosses the membrane as a helical span at residues 81-101; sequence AAWIIFLLDQGLAYVLLAAAA. Over 102-131 the chain is Cytoplasmic; that stretch reads ASTEVAYVAKRGNNKVGWSEVCSTFGHFCN. Residues 132 to 152 traverse the membrane as a helical segment; that stretch reads LVGVSIVITFISVLAMATLSV. Residues 153 to 177 are Extracellular-facing; sequence MSARRLFKTYGPERKQISSNDAPAI.

It belongs to the Casparian strip membrane proteins (CASP) family. As to quaternary structure, homodimer and heterodimers.

Its subcellular location is the cell membrane. In Osmunda lancea (Fern), this protein is CASP-like protein 2U1.